A 146-amino-acid chain; its full sequence is MAQKRPACTLKPECVQQLLVCSQEAKKSAYCPYSHFPVGAALLTQEGRIFKGCNIENACYPLGICAERTAIQKAVSEGYKDFRAIAIASDMQDDFISPCGACRQVMREFGTNWPVYMTKPDGTYIVMTVQELLPSSFGPEDLQKTQ.

Residues 13 to 140 (ECVQQLLVCS…ELLPSSFGPE (128 aa)) enclose the CMP/dCMP-type deaminase domain. Substrate is bound at residue 54–60 (NIENACY). Zn(2+) is bound at residue Cys-65. Catalysis depends on Glu-67, which acts as the Proton donor. Cys-99 and Cys-102 together coordinate Zn(2+).

Belongs to the cytidine and deoxycytidylate deaminase family. In terms of assembly, homotetramer. Zn(2+) serves as cofactor. As to expression, highly expressed in granulocytes while expression is very low in fibroblasts, chondrocytes, monocytes, and T- as well as B-cell lines.

It carries out the reaction cytidine + H2O + H(+) = uridine + NH4(+). The enzyme catalyses 2'-deoxycytidine + H2O + H(+) = 2'-deoxyuridine + NH4(+). Functionally, this enzyme scavenges exogenous and endogenous cytidine and 2'-deoxycytidine for UMP synthesis. The chain is Cytidine deaminase from Homo sapiens (Human).